We begin with the raw amino-acid sequence, 457 residues long: Siroheme synthase (457 aa).

Residues 1-204 are precorrin-2 dehydrogenase /sirohydrochlorin ferrochelatase; that stretch reads MDHLPIFCQL…ADEKAVNATT (204 aa). Residues 22–23 and 43–44 contribute to the NAD(+) site; these read DV and LT. A Phosphoserine modification is found at S128. The segment at 216–457 is uroporphyrinogen-III C-methyltransferase; that stretch reads GEVVLVGAGP…RDKLNWFSNH (242 aa). P225 lines the S-adenosyl-L-methionine pocket. The active-site Proton acceptor is D248. K270 serves as the catalytic Proton donor. S-adenosyl-L-methionine is bound by residues 301–303, I306, 331–332, M382, and G411; these read GGD and TA.

It in the N-terminal section; belongs to the precorrin-2 dehydrogenase / sirohydrochlorin ferrochelatase family. The protein in the C-terminal section; belongs to the precorrin methyltransferase family.

The enzyme catalyses uroporphyrinogen III + 2 S-adenosyl-L-methionine = precorrin-2 + 2 S-adenosyl-L-homocysteine + H(+). The catalysed reaction is precorrin-2 + NAD(+) = sirohydrochlorin + NADH + 2 H(+). It carries out the reaction siroheme + 2 H(+) = sirohydrochlorin + Fe(2+). It participates in cofactor biosynthesis; adenosylcobalamin biosynthesis; precorrin-2 from uroporphyrinogen III: step 1/1. The protein operates within cofactor biosynthesis; adenosylcobalamin biosynthesis; sirohydrochlorin from precorrin-2: step 1/1. Its pathway is porphyrin-containing compound metabolism; siroheme biosynthesis; precorrin-2 from uroporphyrinogen III: step 1/1. It functions in the pathway porphyrin-containing compound metabolism; siroheme biosynthesis; siroheme from sirohydrochlorin: step 1/1. It participates in porphyrin-containing compound metabolism; siroheme biosynthesis; sirohydrochlorin from precorrin-2: step 1/1. In terms of biological role, multifunctional enzyme that catalyzes the SAM-dependent methylations of uroporphyrinogen III at position C-2 and C-7 to form precorrin-2 via precorrin-1. Then it catalyzes the NAD-dependent ring dehydrogenation of precorrin-2 to yield sirohydrochlorin. Finally, it catalyzes the ferrochelation of sirohydrochlorin to yield siroheme. In Salmonella schwarzengrund (strain CVM19633), this protein is Siroheme synthase.